The following is a 678-amino-acid chain: Secretin ExeD (678 aa).

The signal sequence occupies residues 1 to 25 (MINKGKSWRLATVAAALMMAGSAWA). Residues 26 to 122 (TEYSASFKNA…VVDETNPGIG (97 aa)) form an N0 region. An N1 region spans residues 124–188 (EMVTRVVPVR…EVVRRVDKAG (65 aa)). The tract at residues 189-264 (DQEVDIIKLR…MVRQLDRDLQ (76 aa)) is N2. An N3 region spans residues 267–347 (GNTRVFYLKY…ELEQVVAKLD (81 aa)). Residues 352 to 602 (QVLVEAIIVE…VFIRPTILRD (251 aa)) form a secretin region. Residues 604-678 (HVYSGISSNK…GAQPFVQGNK (75 aa)) are s domain.

It belongs to the bacterial secretin family. GSP D subfamily. In terms of assembly, forms a cylindrical channel with 15 subunits.

The protein resides in the cell outer membrane. Its function is as follows. Involved in a type II secretion system (T2SS, formerly general secretion pathway, GSP) for the export of proteins. This subunit forms the outer membrane channel. The polypeptide is Secretin ExeD (exeD) (Aeromonas salmonicida).